The chain runs to 72 residues: Keratin-associated protein 19-5 (72 aa).

Belongs to the KRTAP type 19 family. In terms of assembly, interacts with hair keratins.

Functionally, in the hair cortex, hair keratin intermediate filaments are embedded in an interfilamentous matrix, consisting of hair keratin-associated proteins (KRTAP), which are essential for the formation of a rigid and resistant hair shaft through their extensive disulfide bond cross-linking with abundant cysteine residues of hair keratins. The matrix proteins include the high-sulfur and high-glycine-tyrosine keratins. This chain is Keratin-associated protein 19-5 (KRTAP19-5), found in Homo sapiens (Human).